A 21-amino-acid polypeptide reads, in one-letter code: Peptide PGLa-R3 (21 aa).

Leu21 carries the post-translational modification Leucine amide.

In terms of tissue distribution, expressed by the skin glands.

It localises to the secreted. Antimicrobial peptide. In Xenopus ruwenzoriensis (Uganda clawed frog), this protein is Peptide PGLa-R3.